We begin with the raw amino-acid sequence, 1776 residues long: TOG array regulator of axonemal microtubules protein 1 (1776 aa).

TOG stretches follow at residues Glu-94–Glu-311 and Pro-351–Ser-595. 8 HEAT repeats span residues Ala-175 to Gly-212, Val-214 to Leu-246, Leu-250 to Gln-288, Asn-344 to Pro-383, Ala-389 to Glu-426, Gln-430 to Val-465, Gly-466 to Glu-503, and Phe-505 to Ser-542. 4 disordered regions span residues Lys-655–Ser-676, Ile-817–Asn-921, His-970–Asp-1000, and Thr-1062–Arg-1084. Composition is skewed to polar residues over residues Pro-826–Leu-836, Asp-845–Pro-855, and Leu-871–Gln-892. Residues Ser-988 to Asp-1000 are compositionally biased toward low complexity. The tract at residues Asp-1259–Arg-1481 is TOG 3. HEAT repeat units lie at residues Thr-1297–Lys-1334 and Gln-1338–Pro-1375. Residues Ala-1493–Ala-1536 form a disordered region. Over residues Arg-1509–Ser-1520 the composition is skewed to low complexity. Basic and acidic residues predominate over residues Ser-1521–Arg-1533. Residues Ser-1540–Leu-1776 are TOG 4. 3 HEAT repeats span residues Leu-1541–Glu-1578, Gly-1582–Asp-1619, and Pro-1623–Asn-1661.

Belongs to the Crescerin family. In terms of assembly, interacts with ARMC9. Interacts with CCDC66, CEP104 and CSPP1.

Its subcellular location is the cell projection. The protein localises to the cilium. It localises to the cytoplasm. It is found in the cytoskeleton. The protein resides in the cilium axoneme. Its function is as follows. Involved in ciliogenesis. It is required for appropriate acetylation and polyglutamylation of ciliary microtubules, and regulation of cilium length. Interacts with microtubules and promotes microtubule polymerization via its HEAT repeat domains, especially those in TOG region 2 and 4. The sequence is that of TOG array regulator of axonemal microtubules protein 1 (Togaram1) from Mus musculus (Mouse).